The following is a 444-amino-acid chain: Acyl-CoA 6-desaturase (444 aa).

Residues 1–130 lie on the Cytoplasmic side of the membrane; that stretch reads MGKGGNQGEG…EDMNLFKTNH (130 aa). In terms of domain architecture, Cytochrome b5 heme-binding spans 18 to 95; it reads MPTFRWEEIQ…LKPLLIGELA (78 aa). A helical membrane pass occupies residues 131-151; the sequence is LFFFLLLSHIIVMESIAWFIL. At 152 to 157 the chain is on the lumenal side; it reads SYFGNG. A helical membrane pass occupies residues 158–178; it reads WIPTVITAFVLATSQAQAGWL. The Cytoplasmic portion of the chain corresponds to 179 to 264; it reads QHDYGHLSVY…KYLPYNHQHE (86 aa). The Histidine box-1 motif lies at 180-184; it reads HDYGH. Residues 217-221 carry the Histidine box-2 motif; it reads HFQHH. Residues 265–285 traverse the membrane as a helical segment; sequence YFFLIGPPLLIPMYFQYQIIM. The Lumenal segment spans residues 286–305; the sequence is TMIRRRDWVDLAWAISYYAR. Residues 306–326 form a helical membrane-spanning segment; the sequence is FFYTYIPFYGILGALVFLNFI. Residues 327-444 are Cytoplasmic-facing; sequence RFLESHWFVW…ELWLDAYLHK (118 aa). Residues 382 to 386 carry the Histidine box-3 motif; sequence QIEHH.

The protein belongs to the fatty acid desaturase type 1 family. In terms of tissue distribution, expressed in the liver and brain (at protein level). Highest activity is found in the liver and adrenals followed by the testes and other organs, absent in adipose tissue.

It is found in the endoplasmic reticulum membrane. The protein localises to the microsome membrane. The enzyme catalyses (9Z,12Z)-octadecadienoyl-CoA + 2 Fe(II)-[cytochrome b5] + O2 + 2 H(+) = (6Z,9Z,12Z)-octadecatrienoyl-CoA + 2 Fe(III)-[cytochrome b5] + 2 H2O. The catalysed reaction is (9Z,12Z,15Z)-octadecatrienoyl-CoA + 2 Fe(II)-[cytochrome b5] + O2 + 2 H(+) = (6Z,9Z,12Z,15Z)-octadecatetraenoyl-CoA + 2 Fe(III)-[cytochrome b5] + 2 H2O. It carries out the reaction (9Z,12Z,15Z,18Z,21Z)-tetracosapentaenoyl-CoA + 2 Fe(II)-[cytochrome b5] + O2 + 2 H(+) = (6Z,9Z,12Z,15Z,18Z,21Z)-tetracosahexaenoyl-CoA + 2 Fe(III)-[cytochrome b5] + 2 H2O. It catalyses the reaction (11E)-octadecenoyl-CoA + 2 Fe(II)-[cytochrome b5] + O2 + 2 H(+) = (6Z,11E)-octadecadienoyl-CoA + 2 Fe(III)-[cytochrome b5] + 2 H2O. The enzyme catalyses (11Z,14Z)-eicosadienoyl-CoA + 2 Fe(II)-[cytochrome b5] + O2 + 2 H(+) = (8Z,11Z,14Z)-eicosatrienoyl-CoA + 2 Fe(III)-[cytochrome b5] + 2 H2O. The catalysed reaction is (11Z,14Z,17Z)-eicosatrienoyl-CoA + 2 Fe(II)-[cytochrome b5] + O2 + 2 H(+) = (8Z,11Z,14Z,17Z)-eicosatetraenoyl-CoA + 2 Fe(III)-[cytochrome b5] + 2 H2O. Its pathway is lipid metabolism; polyunsaturated fatty acid biosynthesis. Involved in the biosynthesis of highly unsaturated fatty acids (HUFA) from the essential polyunsaturated fatty acids (PUFA) linoleic acid (LA) (18:2n-6) and alpha-linolenic acid (ALA) (18:3n-3) precursors, acting as a fatty acyl-coenzyme A (CoA) desaturase that introduces a cis double bond at carbon 6 of the fatty acyl chain. Catalyzes the first and rate limiting step in this pathway which is the desaturation of LA (18:2n-6) and ALA (18:3n-3) into gamma-linoleate (GLA) (18:3n-6) and stearidonate (18:4n-3), respectively. Subsequently, in the biosynthetic pathway of HUFA n-3 series, it desaturates tetracosapentaenoate (24:5n-3) to tetracosahexaenoate (24:6n-3), which is then converted to docosahexaenoate (DHA)(22:6n-3), an important lipid for nervous system function. It can also desaturate (11E)-octadecenoate (trans-vaccenoate) at carbon 6 generating (6Z,11E)-octadecadienoate. In addition to Delta-6 activity, this enzyme exhibits Delta-8 activity with slight biases toward n-3 fatty acyl-CoA substrates. The sequence is that of Acyl-CoA 6-desaturase (Fads2) from Rattus norvegicus (Rat).